Reading from the N-terminus, the 46-residue chain is Iota-conotoxin RXIA (46 aa).

A 4-hydroxyproline; partial mark is found at Pro-2 and Pro-11. 4 disulfides stabilise this stretch: Cys-5/Cys-19, Cys-12/Cys-22, Cys-18/Cys-27, and Cys-21/Cys-38. At Pro-29 the chain carries 4-hydroxyproline. Position 44 is a D-phenylalanine (Phe-44).

This sequence belongs to the conotoxin I1 superfamily. In terms of processing, the natural D-Phe-44 form of the peptide is more potent than the L-Phe-44 form. As to expression, expressed by the venom duct.

The protein resides in the secreted. In terms of biological role, iota-conotoxins bind to voltage-gated sodium channels and act as agonists by shifting the voltage-dependence of activation to more hyperpolarized levels. This toxin acts on Nav1.6/SCN8A &gt; Nav1.2/SCN2A &gt; Nav1.7/SCN9A sodium channels. Produces general excitatory symptoms upon intracorporeal injection and repetitive action potentials in the frog cutaneous pectoris muscle. Natural peptide (with D-Phe) is active on nerve, but not on muscle. Synthetic peptide (with L-Phe) is not active on both nerve and muscle. The chain is Iota-conotoxin RXIA from Conus radiatus (Rayed cone).